The following is a 722-amino-acid chain: Methionine--tRNA ligase (722 aa).

The 'HIGH' region motif lies at Pro11–His21. Zn(2+) contacts are provided by Cys143, Cys146, Cys156, and Cys159. The short motif at Lys344–Ser348 is the 'KMSKS' region element. Residue Thr347 coordinates ATP. One can recognise a tRNA-binding domain in the interval Asp622–Arg722.

This sequence belongs to the class-I aminoacyl-tRNA synthetase family. MetG type 1 subfamily. In terms of assembly, homodimer. It depends on Zn(2+) as a cofactor.

The protein resides in the cytoplasm. The catalysed reaction is tRNA(Met) + L-methionine + ATP = L-methionyl-tRNA(Met) + AMP + diphosphate. Is required not only for elongation of protein synthesis but also for the initiation of all mRNA translation through initiator tRNA(fMet) aminoacylation. In Pyrococcus abyssi (strain GE5 / Orsay), this protein is Methionine--tRNA ligase.